Reading from the N-terminus, the 63-residue chain is Megourin-1 (63 aa).

Monomer. In terms of processing, contains four disulfide bonds.

The protein localises to the secreted. Has antimicrobial activity against Gram-positive bacteria and fungi. This is Megourin-1 from Megoura viciae (Vetch aphid).